A 165-amino-acid chain; its full sequence is Deoxyuridine 5'-triphosphate nucleotidohydrolase (165 aa).

It belongs to the dUTPase family. Homotrimer. It depends on Mg(2+) as a cofactor.

It localises to the host cytoplasm. Its subcellular location is the virion. The catalysed reaction is dUTP + H2O = dUMP + diphosphate + H(+). In terms of biological role, the viral dUTPase may play a role in lowering the dUTP concentration in natural infections to minimize misincorporation of deoxyuridine into the viral DNA and ensure the fidelity of genome replication. The protein is Deoxyuridine 5'-triphosphate nucleotidohydrolase of Ornithodoros (relapsing fever ticks).